Consider the following 61-residue polypeptide: Small ribosomal subunit protein uS14 (61 aa).

Zn(2+)-binding residues include Cys-24, Cys-27, Cys-40, and Cys-43.

Belongs to the universal ribosomal protein uS14 family. Zinc-binding uS14 subfamily. As to quaternary structure, part of the 30S ribosomal subunit. Contacts proteins S3 and S10. Zn(2+) serves as cofactor.

Its function is as follows. Binds 16S rRNA, required for the assembly of 30S particles and may also be responsible for determining the conformation of the 16S rRNA at the A site. The polypeptide is Small ribosomal subunit protein uS14 (Syntrophus aciditrophicus (strain SB)).